Here is a 344-residue protein sequence, read N- to C-terminus: Deoxyhypusine hydroxylase (344 aa).

HEAT-like PBS-type repeat units lie at residues 81 to 107 (LKHE…VLED) and 115 to 140 (RHEA…FRDR). Fe cation is bound by residues histidine 83, glutamate 84, histidine 116, and glutamate 117. Residues 169–188 (EKLRASDFSSVDPAPPTAQG) are disordered. HEAT-like PBS-type repeat units lie at residues 210 to 240 (KRYR…LAKG), 248 to 274 (FRHE…ALSN), and 281 to 308 (VRHE…FLHD). Histidine 250, glutamate 251, histidine 283, and glutamate 284 together coordinate Fe cation.

This sequence belongs to the deoxyhypusine hydroxylase family. Requires Fe(2+) as cofactor.

The protein localises to the cytoplasm. Its subcellular location is the nucleus. It carries out the reaction [eIF5A protein]-deoxyhypusine + AH2 + O2 = [eIF5A protein]-hypusine + A + H2O. It functions in the pathway protein modification; eIF5A hypusination. In terms of biological role, catalyzes the hydroxylation of the N(6)-(4-aminobutyl)-L-lysine intermediate to form hypusine, an essential post-translational modification only found in mature eIF-5A factor. This is Deoxyhypusine hydroxylase from Chaetomium globosum (strain ATCC 6205 / CBS 148.51 / DSM 1962 / NBRC 6347 / NRRL 1970) (Soil fungus).